A 207-amino-acid polypeptide reads, in one-letter code: 8-oxoguanine DNA glycosylase/AP lyase (207 aa).

Residues K129 and D147 contribute to the active site.

The protein belongs to the type-2 OGG1 family.

It catalyses the reaction 2'-deoxyribonucleotide-(2'-deoxyribose 5'-phosphate)-2'-deoxyribonucleotide-DNA = a 3'-end 2'-deoxyribonucleotide-(2,3-dehydro-2,3-deoxyribose 5'-phosphate)-DNA + a 5'-end 5'-phospho-2'-deoxyribonucleoside-DNA + H(+). In terms of biological role, catalyzes the excision of an oxidatively damaged form of guanine (7,8-dihydro-8-oxoguanine = 8-oxoG) from DNA. Also cleaves the DNA backbone at apurinic/apyrimidinic sites (AP sites). This is 8-oxoguanine DNA glycosylase/AP lyase from Thermotoga sp. (strain RQ2).